The chain runs to 229 residues: Cell division protein FtsQ (229 aa).

The helical transmembrane segment at methionine 1 to leucine 21 threads the bilayer. The Periplasmic segment spans residues glutamate 22–lysine 229. A POTRA domain is found at asparagine 27–histidine 97.

It belongs to the FtsQ/DivIB family. FtsQ subfamily. As to quaternary structure, part of a complex composed of FtsB, FtsL and FtsQ.

The protein localises to the cell inner membrane. Its function is as follows. Essential cell division protein. May link together the upstream cell division proteins, which are predominantly cytoplasmic, with the downstream cell division proteins, which are predominantly periplasmic. May control correct divisome assembly. The chain is Cell division protein FtsQ from Actinobacillus pleuropneumoniae serotype 3 (strain JL03).